We begin with the raw amino-acid sequence, 554 residues long: Calcium/calmodulin-dependent protein kinase type II delta 2 chain (554 aa).

One can recognise a Protein kinase domain in the interval 13-271 (YQLFEELGKG…AAEAPKHPWI (259 aa)). Residues 19 to 27 (LGKGAFSVV) and Lys-42 contribute to the ATP site. The active-site Proton acceptor is the Asp-135. Thr-286 carries the post-translational modification Phosphothreonine. Phosphoserine occurs at positions 314 and 318. Disordered stretches follow at residues 324–375 (PDGV…TIED) and 392–413 (WQPS…SSVQ). Residues 330 to 340 (NNKTNLASSPK) show a composition bias toward polar residues. Thr-372 bears the Phosphothreonine mark.

Belongs to the protein kinase superfamily. CAMK Ser/Thr protein kinase family. CaMK subfamily. CAMK2 is composed of four different chains: alpha, beta, gamma, and delta. The different isoforms assemble into homo- or heteromultimeric holoenzymes composed of 8 to 12 subunits. In terms of tissue distribution, first detected at 18 hpf. At 24 hpf, expressed in discrete anterior locations and along either side of the midline. At 48 hpf, expression is predominantly in the forebrain, and then accumulates in the forebrain, hindbrain, and retinal epithelium at 72 hpf.

It carries out the reaction L-seryl-[protein] + ATP = O-phospho-L-seryl-[protein] + ADP + H(+). The catalysed reaction is L-threonyl-[protein] + ATP = O-phospho-L-threonyl-[protein] + ADP + H(+). With respect to regulation, autophosphorylation of CAMK2 plays an important role in the regulation of the kinase activity. CaM-kinase II (CAMK2) is a prominent kinase in the central nervous system. The sequence is that of Calcium/calmodulin-dependent protein kinase type II delta 2 chain (camk2d2) from Danio rerio (Zebrafish).